The primary structure comprises 219 residues: uncharacterized protein (219 aa).

A run of 2 helical transmembrane segments spans residues 8–28 (MILF…TLSV) and 194–214 (GIPG…GLLF).

The protein localises to the cell membrane. This is an uncharacterized protein from Archaeoglobus fulgidus (strain ATCC 49558 / DSM 4304 / JCM 9628 / NBRC 100126 / VC-16).